The following is a 110-amino-acid chain: NADH-quinone oxidoreductase subunit K (110 aa).

Transmembrane regions (helical) follow at residues 13–33 (LNHYLILSSLVFTIGMFGLFM), 41–61 (ILMSIELMLLAVNINFVAFSI), and 73–93 (IIILTVAAAETSIGLAILLIY).

This sequence belongs to the complex I subunit 4L family. In terms of assembly, NDH-1 is composed of 14 different subunits. Subunits NuoA, H, J, K, L, M, N constitute the membrane sector of the complex.

It localises to the cell inner membrane. It catalyses the reaction a quinone + NADH + 5 H(+)(in) = a quinol + NAD(+) + 4 H(+)(out). In terms of biological role, NDH-1 shuttles electrons from NADH, via FMN and iron-sulfur (Fe-S) centers, to quinones in the respiratory chain. The immediate electron acceptor for the enzyme in this species is believed to be ubiquinone. Couples the redox reaction to proton translocation (for every two electrons transferred, four hydrogen ions are translocated across the cytoplasmic membrane), and thus conserves the redox energy in a proton gradient. This is NADH-quinone oxidoreductase subunit K from Rickettsia conorii (strain ATCC VR-613 / Malish 7).